The chain runs to 427 residues: Neuronal pentraxin-2 (427 aa).

Positions Met1–Ala17 are cleaved as a signal peptide. 2 N-linked (GlcNAc...) asparagine glycosylation sites follow: Asn144 and Asn185. A Pentraxin (PTX) domain is found at Asp219–Cys420. A disulfide bridge connects residues Cys249 and Cys309. Residues Asn273, Glu351, Gln352, Asp353, and Gln363 each contribute to the Ca(2+) site. Asn389 carries N-linked (GlcNAc...) asparagine glycosylation.

In terms of assembly, homooligomer or heterooligomer (probably pentamer) with neuronal pentraxin receptor (NPTXR). The cofactor is Ca(2+). As to expression, testis specific.

It localises to the cytoplasmic vesicle. It is found in the secretory vesicle. Its subcellular location is the acrosome lumen. May be involved in binding, concentrating, and sorting soluble glycoproteins or glycolipids that are destined for the acrosome. The sequence is that of Neuronal pentraxin-2 (NPTX2) from Cavia porcellus (Guinea pig).